We begin with the raw amino-acid sequence, 334 residues long: Glycerol-3-phosphate dehydrogenase [NAD(P)+] (334 aa).

Ser14, Tyr15, His35, and Lys109 together coordinate NADPH. Sn-glycerol 3-phosphate contacts are provided by Lys109, Gly138, and Thr140. Ala142 is an NADPH binding site. 5 residues coordinate sn-glycerol 3-phosphate: Lys194, Asp247, Ser257, Arg258, and Asn259. Lys194 serves as the catalytic Proton acceptor. Arg258 lines the NADPH pocket. Val282 and Glu284 together coordinate NADPH.

This sequence belongs to the NAD-dependent glycerol-3-phosphate dehydrogenase family.

The protein resides in the cytoplasm. The enzyme catalyses sn-glycerol 3-phosphate + NAD(+) = dihydroxyacetone phosphate + NADH + H(+). The catalysed reaction is sn-glycerol 3-phosphate + NADP(+) = dihydroxyacetone phosphate + NADPH + H(+). It functions in the pathway membrane lipid metabolism; glycerophospholipid metabolism. Its function is as follows. Catalyzes the reduction of the glycolytic intermediate dihydroxyacetone phosphate (DHAP) to sn-glycerol 3-phosphate (G3P), the key precursor for phospholipid synthesis. This is Glycerol-3-phosphate dehydrogenase [NAD(P)+] from Psychromonas ingrahamii (strain DSM 17664 / CCUG 51855 / 37).